Consider the following 416-residue polypeptide: Glutamyl-tRNA reductase (416 aa).

Substrate-binding positions include 49–52, S105, 110–112, and Q116; these read TCNR and EPQ. The Nucleophile role is filled by C50. Residue 185 to 190 participates in NADP(+) binding; it reads GAGETI.

Belongs to the glutamyl-tRNA reductase family. As to quaternary structure, homodimer.

The catalysed reaction is (S)-4-amino-5-oxopentanoate + tRNA(Glu) + NADP(+) = L-glutamyl-tRNA(Glu) + NADPH + H(+). It participates in porphyrin-containing compound metabolism; protoporphyrin-IX biosynthesis; 5-aminolevulinate from L-glutamyl-tRNA(Glu): step 1/2. Catalyzes the NADPH-dependent reduction of glutamyl-tRNA(Glu) to glutamate 1-semialdehyde (GSA). The sequence is that of Glutamyl-tRNA reductase from Shewanella baltica (strain OS185).